Here is a 348-residue protein sequence, read N- to C-terminus: Rhodopsin (348 aa).

The residue at position 1 (methionine 1) is an N-acetylmethionine. Over 1-36 (MNGTEGPNFYVPFSNITGVVRSPFEQPQYYLAEPWQ) the chain is Extracellular. N-linked (GlcNAc...) asparagine glycosylation is found at asparagine 2 and asparagine 15. Residues 37-61 (FSMLAAYMFLLIVLGFPINFLTLYV) traverse the membrane as a helical segment. Residues 62–73 (TVQHKKLRTPLN) lie on the Cytoplasmic side of the membrane. The helical transmembrane segment at 74-96 (YILLNLAVADLFMVFGGFTTTLY) threads the bilayer. The Extracellular portion of the chain corresponds to 97-110 (TSLHGYFVFGPTGC). A disulfide bridge connects residues cysteine 110 and cysteine 187. A helical transmembrane segment spans residues 111 to 133 (NLEGFFATLGGEIGLWSLVVLAI). The short motif at 134–136 (ERY) is the 'Ionic lock' involved in activated form stabilization element. The Cytoplasmic portion of the chain corresponds to 134 to 152 (ERYVVVCKPMSNFRFGENH). The chain crosses the membrane as a helical span at residues 153–173 (AIMGVAFTWVMALACAAPPLV). Residues 174–202 (GWSRYIPEGMQCSCGIDYYTLKPEVNNES) are Extracellular-facing. Glutamate 201 contacts Zn(2+). Residues 203–224 (FVIYMFVVHFTIPMIVIFFCYG) traverse the membrane as a helical segment. Residues 225–252 (QLVFTVKEAAAQQQESATTQKAEKEVTR) are Cytoplasmic-facing. The chain crosses the membrane as a helical span at residues 253–274 (MVIIMVIFFLICWLPYASVAMY). At 275–286 (IFTHQGSNFGPI) the chain is on the extracellular side. A Zn(2+)-binding site is contributed by glutamine 279. A helical transmembrane segment spans residues 287 to 308 (FMTLPAFFAKTASIYNPIIYIM). Lysine 296 bears the N6-(retinylidene)lysine mark. Topologically, residues 309–348 (MNKQFRNCMLTSLCCGKNPLGDDEASATASKTETSQVAPA) are cytoplasmic. S-palmitoyl cysteine attachment occurs at residues cysteine 322 and cysteine 323. The interval 330-348 (DDEASATASKTETSQVAPA) is interaction with SAG. Serine 334 carries the phosphoserine modification. Position 336 is a phosphothreonine (threonine 336). Serine 338 carries the post-translational modification Phosphoserine. Threonine 340 and threonine 342 each carry phosphothreonine. Serine 343 carries the post-translational modification Phosphoserine.

Belongs to the G-protein coupled receptor 1 family. Opsin subfamily. Homodimer. May form a complex composed of RHO, GRK1 and RCVRN in a Ca(2+)-dependent manner; RCVRN prevents the interaction between GRK1 and RHO. Interacts with GRK1. Interacts (phosphorylated form) with SAG. Interacts with GNAT1. Interacts with GNAT3. SAG and G-proteins compete for a common binding site. Interacts with PRCD; the interaction promotes PRCD stability. Forms a complex with ASAP1 and ARF4. Forms a complex with ASAP1, RAB11A, Rabin8/RAB3IP, ARF4 and RAB11FIP3; the complex regulates Golgi-to-cilia rhodopsin/RHO transport in photoreceptors. Post-translationally, phosphorylated on some or all of the serine and threonine residues present in the C-terminal region. Contains one covalently linked retinal chromophore. Upon light absorption, the covalently bound 11-cis-retinal is converted to all-trans-retinal. After hydrolysis of the Schiff base and release of the covalently bound all-trans-retinal, active rhodopsin is regenerated by binding of a fresh molecule of 11-cis-retinal.

The protein localises to the membrane. The protein resides in the cell projection. Its subcellular location is the cilium. It localises to the photoreceptor outer segment. Its function is as follows. Photoreceptor required for image-forming vision at low light intensity. Required for photoreceptor cell viability after birth. Light-induced isomerization of 11-cis to all-trans retinal triggers a conformational change that activates signaling via G-proteins. Subsequent receptor phosphorylation mediates displacement of the bound G-protein alpha subunit by the arrestin SAG and terminates signaling. This is Rhodopsin (Rho) from Rattus norvegicus (Rat).